Here is a 321-residue protein sequence, read N- to C-terminus: Manganese-dependent ADP-ribose/CDP-alcohol diphosphatase (321 aa).

Zn(2+) contacts are provided by D25, Q27, D72, N107, H226, H263, and H265.

It belongs to the ADPRibase-Mn family. As to quaternary structure, monomer. Mg(2+) serves as cofactor.

It carries out the reaction CDP-choline + H2O = phosphocholine + CMP + 2 H(+). The catalysed reaction is ADP-D-ribose + H2O = D-ribose 5-phosphate + AMP + 2 H(+). It catalyses the reaction CDP-glycerol + H2O = sn-glycerol 3-phosphate + CMP + 2 H(+). In terms of biological role, hydrolyzes ADP-ribose, IDP-ribose, CDP-glycerol, CDP-choline and CDP-ethanolamine, but not other non-reducing ADP-sugars or CDP-glucose. This Oryza sativa subsp. japonica (Rice) protein is Manganese-dependent ADP-ribose/CDP-alcohol diphosphatase.